The chain runs to 322 residues: Phospho-N-acetylmuramoyl-pentapeptide-transferase (322 aa).

The next 10 helical transmembrane spans lie at 9–29, 54–74, 82–102, 122–142, 145–165, 176–196, 200–220, 227–247, 255–275, and 302–322; these read IALVSSLVLTVIFLPVLINFM, TMGGTIFVIAAVISVIWVAAW, VWILVISLLGYGIIGFLDDGI, IIIAVVIVLIASSDHFQFGLY, FAGVVHSIALFTIFIIFWLVG, LDGLATGLSIVAYGTYAYIAF, NFAVLAFCMSVIGGLIAFFIF, IFMGDAGSLALGGGLATVSIM, LLIGIVFVCETASVILQVISF, and VDIVFWLVGLICSILYLAIWG.

This sequence belongs to the glycosyltransferase 4 family. MraY subfamily. The cofactor is Mg(2+).

Its subcellular location is the cell membrane. It carries out the reaction UDP-N-acetyl-alpha-D-muramoyl-L-alanyl-gamma-D-glutamyl-L-lysyl-D-alanyl-D-alanine + di-trans,octa-cis-undecaprenyl phosphate = Mur2Ac(oyl-L-Ala-gamma-D-Glu-L-Lys-D-Ala-D-Ala)-di-trans,octa-cis-undecaprenyl diphosphate + UMP. Its pathway is cell wall biogenesis; peptidoglycan biosynthesis. Its function is as follows. Catalyzes the initial step of the lipid cycle reactions in the biosynthesis of the cell wall peptidoglycan: transfers peptidoglycan precursor phospho-MurNAc-pentapeptide from UDP-MurNAc-pentapeptide onto the lipid carrier undecaprenyl phosphate, yielding undecaprenyl-pyrophosphoryl-MurNAc-pentapeptide, known as lipid I. In Lactobacillus acidophilus (strain ATCC 700396 / NCK56 / N2 / NCFM), this protein is Phospho-N-acetylmuramoyl-pentapeptide-transferase.